A 593-amino-acid polypeptide reads, in one-letter code: NADH-quinone oxidoreductase subunit C/D (593 aa).

Residues 1–184 form an NADH dehydrogenase I subunit C region; sequence MTADTAVSIP…DPFSLTLAKQ (184 aa). The segment at 208 to 593 is NADH dehydrogenase I subunit D; the sequence is DYMFLNLGPN…IDFVMADVDR (386 aa).

This sequence in the N-terminal section; belongs to the complex I 30 kDa subunit family. It in the C-terminal section; belongs to the complex I 49 kDa subunit family. As to quaternary structure, NDH-1 is composed of 13 different subunits. Subunits NuoB, CD, E, F, and G constitute the peripheral sector of the complex.

It is found in the cell inner membrane. It catalyses the reaction a quinone + NADH + 5 H(+)(in) = a quinol + NAD(+) + 4 H(+)(out). In terms of biological role, NDH-1 shuttles electrons from NADH, via FMN and iron-sulfur (Fe-S) centers, to quinones in the respiratory chain. The immediate electron acceptor for the enzyme in this species is believed to be ubiquinone. Couples the redox reaction to proton translocation (for every two electrons transferred, four hydrogen ions are translocated across the cytoplasmic membrane), and thus conserves the redox energy in a proton gradient. This is NADH-quinone oxidoreductase subunit C/D from Ectopseudomonas mendocina (strain ymp) (Pseudomonas mendocina).